The chain runs to 204 residues: Tat proofreading chaperone DmsD (204 aa).

The protein belongs to the TorD/DmsD family. DmsD subfamily. As to quaternary structure, monomer in solution.

Its function is as follows. Required for biogenesis/assembly of DMSO reductase, but not for the interaction of the DmsA signal peptide with the Tat system. May be part of a chaperone cascade complex that facilitates a folding-maturation pathway for the substrate protein. The sequence is that of Tat proofreading chaperone DmsD from Salmonella typhimurium (strain LT2 / SGSC1412 / ATCC 700720).